The primary structure comprises 311 residues: 4-hydroxy-tetrahydrodipicolinate synthase (311 aa).

Thr-51 provides a ligand contact to pyruvate. The Proton donor/acceptor role is filled by Tyr-140. Lys-168 (schiff-base intermediate with substrate) is an active-site residue. Ile-209 is a binding site for pyruvate.

This sequence belongs to the DapA family. In terms of assembly, homotetramer; dimer of dimers.

Its subcellular location is the cytoplasm. The catalysed reaction is L-aspartate 4-semialdehyde + pyruvate = (2S,4S)-4-hydroxy-2,3,4,5-tetrahydrodipicolinate + H2O + H(+). It functions in the pathway amino-acid biosynthesis; L-lysine biosynthesis via DAP pathway; (S)-tetrahydrodipicolinate from L-aspartate: step 3/4. In terms of biological role, catalyzes the condensation of (S)-aspartate-beta-semialdehyde [(S)-ASA] and pyruvate to 4-hydroxy-tetrahydrodipicolinate (HTPA). The chain is 4-hydroxy-tetrahydrodipicolinate synthase from Streptococcus gordonii (strain Challis / ATCC 35105 / BCRC 15272 / CH1 / DL1 / V288).